The primary structure comprises 113 residues: Cholecystoxin (113 aa).

The signal sequence occupies residues 1–20; the sequence is MYGGICLCVLLAVLAISSSG. Positions 21–79 are excised as a propeptide; it reads QHISRSLNGNSLAAAIEQNFPEKHRPARTPDSNQRVESNIDEKANLGVLLARYLQKARR. Residues 77–97 are disordered; that stretch reads ARRGTNGKPPDPKKESQDYLG. Residue tyrosine 95 is modified to Sulfotyrosine. Residue phenylalanine 101 is modified to Phenylalanine amide. A propeptide spanning residues 102-113 is cleaved from the precursor; it reads GRRSAEEYEYSS.

Belongs to the gastrin/cholecystokinin family. In terms of tissue distribution, expressed by the mandibular venom gland.

Its subcellular location is the secreted. Its function is as follows. Cholecystokinin-22: hypotensive neuropeptide that binds cholecystokinin receptor type A receptor (CCKAR). In terms of biological role, cholecystokinin-8: hypotensive neuropeptide that binds cholecystokinin receptor type A receptor (CCKAR). This chain is Cholecystoxin, found in Varanus varius (Lace monitor lizard).